The primary structure comprises 137 residues: Cell division protein SepF (137 aa).

This sequence belongs to the SepF family. Homodimer. Interacts with FtsZ.

Its subcellular location is the cytoplasm. Cell division protein that is part of the divisome complex and is recruited early to the Z-ring. Probably stimulates Z-ring formation, perhaps through the cross-linking of FtsZ protofilaments. Its function overlaps with FtsA. This Thermoanaerobacter pseudethanolicus (strain ATCC 33223 / 39E) (Clostridium thermohydrosulfuricum) protein is Cell division protein SepF.